The primary structure comprises 149 residues: Probable calcium-binding protein CML25/26 (149 aa).

EF-hand domains follow at residues 1–35 (MASS…ALGE), 37–72 (VSEE…HQLQ), 77–113 (ESLR…LGSE), and 117–149 (LEME…MLMA). 9 residues coordinate Ca(2+): Asp-13, Asp-15, Asp-17, Lys-19, Glu-24, Asp-50, Asp-52, Asp-54, and Glu-61. Residues Asp-130, Asn-132, Asp-134, and Glu-141 each contribute to the Ca(2+) site.

Functionally, potential calcium sensor. The polypeptide is Probable calcium-binding protein CML25/26 (CML25) (Oryza sativa subsp. japonica (Rice)).